The sequence spans 322 residues: Putative ankyrin repeat protein L897 (322 aa).

ANK repeat units lie at residues 88–117 (DNEYYTYFALSIGAMDVFKWLISHGFSYDM), 181–210 (NIIDVIEYAVQINNCDIIKILVKKFIFWAN), and 248–277 (NKNEALKYAIMMKNYDMIELLINYNIQTDH).

The protein is Putative ankyrin repeat protein L897 of Acanthamoeba polyphaga (Amoeba).